The following is a 399-amino-acid chain: [Pyruvate dehydrogenase (acetyl-transferring)] kinase, mitochondrial (399 aa).

The transit peptide at 1–18 directs the protein to the mitochondrion; it reads MFLTRRLLGPFTSAIARK. Residues 123-360 form the Histidine kinase domain; the sequence is VVETMAEGLI…DAMIFLKAIP (238 aa). ATP-binding positions include 247–254, Asp-286, 305–306, and 321–326; these read ELFKNSMR, ST, and GYGYGL.

It belongs to the PDK/BCKDK protein kinase family.

The protein localises to the mitochondrion matrix. The enzyme catalyses L-seryl-[pyruvate dehydrogenase E1 alpha subunit] + ATP = O-phospho-L-seryl-[pyruvate dehydrogenase E1 alpha subunit] + ADP + H(+). In terms of biological role, inhibits the mitochondrial pyruvate dehydrogenase complex by phosphorylation of the E1 alpha subunit, thus contributing to the regulation of glucose metabolism. The polypeptide is [Pyruvate dehydrogenase (acetyl-transferring)] kinase, mitochondrial (Ascaris suum (Pig roundworm)).